The chain runs to 397 residues: Acetate kinase 1 (397 aa).

Asn-8 serves as a coordination point for Mg(2+). Lys-15 contacts ATP. Position 89 (Arg-89) interacts with substrate. The active-site Proton donor/acceptor is the Asp-146. ATP is bound by residues 206–210 (HLGNG), 281–283 (DLR), and 329–333 (GIGEN). Mg(2+) is bound at residue Glu-382.

It belongs to the acetokinase family. Homodimer. Mg(2+) serves as cofactor. Requires Mn(2+) as cofactor.

The protein localises to the cytoplasm. The enzyme catalyses acetate + ATP = acetyl phosphate + ADP. The protein operates within metabolic intermediate biosynthesis; acetyl-CoA biosynthesis; acetyl-CoA from acetate: step 1/2. Catalyzes the formation of acetyl phosphate from acetate and ATP. Can also catalyze the reverse reaction. The sequence is that of Acetate kinase 1 from Listeria innocua serovar 6a (strain ATCC BAA-680 / CLIP 11262).